The primary structure comprises 518 residues: GMP synthase [glutamine-hydrolyzing] (518 aa).

The Glutamine amidotransferase type-1 domain maps to 13–203; the sequence is KIIVLDFGSQ…ALNVCGCKGD (191 aa). The active-site Nucleophile is the Cys-90. Catalysis depends on residues His-177 and Glu-179. Residues 204–393 form the GMPS ATP-PPase domain; that stretch reads WTMENFSEVE…LGMPDAIVWR (190 aa). 231-237 provides a ligand contact to ATP; the sequence is SGGVDSS.

In terms of assembly, homodimer.

The enzyme catalyses XMP + L-glutamine + ATP + H2O = GMP + L-glutamate + AMP + diphosphate + 2 H(+). It participates in purine metabolism; GMP biosynthesis; GMP from XMP (L-Gln route): step 1/1. Catalyzes the synthesis of GMP from XMP. The polypeptide is GMP synthase [glutamine-hydrolyzing] (Listeria monocytogenes serovar 1/2a (strain ATCC BAA-679 / EGD-e)).